A 308-amino-acid chain; its full sequence is Pantothenate synthetase (308 aa).

An ATP-binding site is contributed by 39–46 (MGALHDGH). The active-site Proton donor is histidine 46. Glutamine 71 is a binding site for (R)-pantoate. Glutamine 71 is a binding site for beta-alanine. An ATP-binding site is contributed by 157–160 (GEKD). A (R)-pantoate-binding site is contributed by glutamine 163. ATP is bound by residues valine 186 and 194 to 197 (MSSR). Residues 286-308 (IETPAGTAGPDGDRQYAQSPWRN) form a disordered region.

Belongs to the pantothenate synthetase family. As to quaternary structure, homodimer.

The protein resides in the cytoplasm. The enzyme catalyses (R)-pantoate + beta-alanine + ATP = (R)-pantothenate + AMP + diphosphate + H(+). It functions in the pathway cofactor biosynthesis; (R)-pantothenate biosynthesis; (R)-pantothenate from (R)-pantoate and beta-alanine: step 1/1. Its function is as follows. Catalyzes the condensation of pantoate with beta-alanine in an ATP-dependent reaction via a pantoyl-adenylate intermediate. This chain is Pantothenate synthetase, found in Mycolicibacterium paratuberculosis (strain ATCC BAA-968 / K-10) (Mycobacterium paratuberculosis).